A 78-amino-acid polypeptide reads, in one-letter code: Small integral membrane protein 10-like protein 2A (78 aa).

This is Small integral membrane protein 10-like protein 2A from Homo sapiens (Human).